Reading from the N-terminus, the 255-residue chain is Probable esterase ATEG_07663 (255 aa).

Residues Ser122, Asp200, and His227 each act as charge relay system in the active site.

The protein belongs to the LovG family.

Probable esterase; part of the cluster B that mediates the biosynthesis of azasperpyranones, members of the azaphilone family that exhibit anti-cancer activities. Azasperpyranones are synthesized by 2 clusters, A and B. Cluster A is responsible for the production of the polyhydric phenol moiety while the azaphilonoid scaffold is produced by the cluster B. The non-reducing polyketide synthase ATEG_03629 produces 5-methyl orsellinic acid, which is then reduced to 5-methyl orsellinic aldehyde by the NRPS-like protein ATEG_03630. 5-methyl orsellinic aldehyde is then first hydroxylated by the FAD-dependent monooxygenase ATEG_03635 and subsequently hydroxylated by the cytochrome P450 monooxygenase ATEG_03631 to produce the unstable polyhydric phenol precursor of azasperpyranones. On the other hand, the polyketide synthase ATEG_07659 is responsible for producing the 3,5-dimethyloctadienone moiety from acetyl-CoA, three malonyl-CoA, and two S-adenosyl methionines (SAM). The 3,5-dimethyloctadienone moiety is then loaded onto the SAT domain of ATEG_07661 and extended with four malonyl-CoA and one SAM, which leads to the formation of 2,4-dihydroxy-6-(5,7-dimethyl-2-oxo-trans-3-trans-5-nonadienyl)-3-methylbenzaldehyde (compound 8) after reductive release and aldol condensation. The FAD-dependent monooxygenase ATEG_07662 is the next enzyme in the biosynthesis sequence and hydroxylates the side chain at the benzylic position of compound 8. In Aspergillus nidulans, afoF, the ortholog of the FAD-dependent oxygenase ATEG_07660, is the key enzyme for the biosynthesis of asperfuranone by catalyzing the hydroxylation at C-8 of to prevent the formation of a six-membered ring hemiacetal intermediate and thus facilitating the formation of a five-membered ring to produce asperfuranone. In Aspergillus terreus, ATEG_07660 is probably not functional, which leads to the formation of the six-membered ring hemiacetal intermediate presperpyranone instead of asperfuranone. Finally, ATEG_03636 is involved in the condensation of the polyhydric phenol moiety produced by cluster A and the perasperpyranone precursor produced by cluster B, to yield azasperpyranone A. Further modifications of azasperpyranone A result in the production of derivatives, including azasperpyranone B to F. In Aspergillus terreus (strain NIH 2624 / FGSC A1156), this protein is Probable esterase ATEG_07663.